A 118-amino-acid polypeptide reads, in one-letter code: Large ribosomal subunit protein bL20 (118 aa).

The protein belongs to the bacterial ribosomal protein bL20 family.

Functionally, binds directly to 23S ribosomal RNA and is necessary for the in vitro assembly process of the 50S ribosomal subunit. It is not involved in the protein synthesizing functions of that subunit. This chain is Large ribosomal subunit protein bL20, found in Lacticaseibacillus casei (strain BL23) (Lactobacillus casei).